An 83-amino-acid polypeptide reads, in one-letter code: Small ribosomal subunit protein bS16 (83 aa).

Belongs to the bacterial ribosomal protein bS16 family.

The sequence is that of Small ribosomal subunit protein bS16 from Stutzerimonas stutzeri (strain A1501) (Pseudomonas stutzeri).